The sequence spans 276 residues: MLIDFSKMHGLGNDFMVVDGVTQKVFFSNDVIKKLADRHFGIGFDQLLLVEPPYDPELDFHYRIFNADGSEVEQCGNGARCFARFVRLKGLINRDRIAVSTARGRISLQLEGENQVTVNMGVPQFEPGKIPFRAQKAEKTYLLRAQEHTVMCGVVSMGNPHCVIEVPSVADAPVETLGAIMERHERFPERVNVGFMEMVNATEIRLRVFERGVGETLACGTGACAAAVIGISQGKLKERVTVSLPGGKLTIAWKGPGQPVYMTGPAEHVFDGQIEL.

Residues asparagine 13, glutamine 46, and asparagine 66 each contribute to the substrate site. Cysteine 75 (proton donor) is an active-site residue. Substrate is bound by residues 76-77 (GN), asparagine 159, asparagine 192, and 210-211 (ER). Residue cysteine 219 is the Proton acceptor of the active site. 220–221 (GT) serves as a coordination point for substrate.

It belongs to the diaminopimelate epimerase family. Homodimer.

The protein localises to the cytoplasm. The catalysed reaction is (2S,6S)-2,6-diaminopimelate = meso-2,6-diaminopimelate. It functions in the pathway amino-acid biosynthesis; L-lysine biosynthesis via DAP pathway; DL-2,6-diaminopimelate from LL-2,6-diaminopimelate: step 1/1. In terms of biological role, catalyzes the stereoinversion of LL-2,6-diaminopimelate (L,L-DAP) to meso-diaminopimelate (meso-DAP), a precursor of L-lysine and an essential component of the bacterial peptidoglycan. The chain is Diaminopimelate epimerase from Aeromonas salmonicida (strain A449).